A 108-amino-acid chain; its full sequence is Parvalbumin beta 2 (108 aa).

The residue at position 2 (Ser-2) is an N-acetylserine. EF-hand domains follow at residues 38–73 and 77–108; these read KSSD…FSAS and LTDA…MIKG. Positions 51, 53, 55, 57, 59, 62, 90, 92, 94, 96, and 101 each coordinate Ca(2+).

Belongs to the parvalbumin family.

Its function is as follows. In muscle, parvalbumin is thought to be involved in relaxation after contraction. It binds two calcium ions. This chain is Parvalbumin beta 2, found in Salmo salar (Atlantic salmon).